The chain runs to 118 residues: MTQEKGKFAEQLALNYLKENGLALVMQNYHCRLGEIDLIMREGSYLVFVEVRSRSNMNFGGGLASITYEKKQKIIKATSHYMIKYRIQDKFPIRFDVISIDGKSNKITWLKNAFDAGC.

The protein belongs to the UPF0102 family.

The chain is UPF0102 protein lpg2994 from Legionella pneumophila subsp. pneumophila (strain Philadelphia 1 / ATCC 33152 / DSM 7513).